A 98-amino-acid chain; its full sequence is NADH-ubiquinone oxidoreductase chain 4L (98 aa).

Helical transmembrane passes span 1–21 (MSLINMNLMLAFTMSLTGLLM), 29–49 (ALLCLEGMMLSLFTLTTLTIL), and 61–81 (IILLVFAACEAAIGLALLVMI).

Belongs to the complex I subunit 4L family. In terms of assembly, core subunit of respiratory chain NADH dehydrogenase (Complex I) which is composed of 45 different subunits.

The protein resides in the mitochondrion inner membrane. The enzyme catalyses a ubiquinone + NADH + 5 H(+)(in) = a ubiquinol + NAD(+) + 4 H(+)(out). Its function is as follows. Core subunit of the mitochondrial membrane respiratory chain NADH dehydrogenase (Complex I) which catalyzes electron transfer from NADH through the respiratory chain, using ubiquinone as an electron acceptor. Part of the enzyme membrane arm which is embedded in the lipid bilayer and involved in proton translocation. The protein is NADH-ubiquinone oxidoreductase chain 4L (MT-ND4L) of Platanista minor (Indus river dolphin).